The following is a 233-amino-acid chain: Small ribosomal subunit protein uS2c (233 aa).

Belongs to the universal ribosomal protein uS2 family.

It is found in the plastid. The protein localises to the chloroplast. In Staurastrum punctulatum (Green alga), this protein is Small ribosomal subunit protein uS2c (rps2).